The chain runs to 282 residues: Putative hydrolase Bcep18194_B0137 (282 aa).

Positions 124, 126, and 155 each coordinate Mg(2+).

This sequence belongs to the FAH family. Requires Mg(2+) as cofactor.

The sequence is that of Putative hydrolase Bcep18194_B0137 from Burkholderia lata (strain ATCC 17760 / DSM 23089 / LMG 22485 / NCIMB 9086 / R18194 / 383).